Here is a 511-residue protein sequence, read N- to C-terminus: Serine hydroxymethyltransferase (511 aa).

Lys-287 is modified (N6-(pyridoxal phosphate)lysine).

This sequence belongs to the SHMT family. Homotetramer. Pyridoxal 5'-phosphate serves as cofactor.

The enzyme catalyses (6R)-5,10-methylene-5,6,7,8-tetrahydrofolate + glycine + H2O = (6S)-5,6,7,8-tetrahydrofolate + L-serine. It functions in the pathway one-carbon metabolism; tetrahydrofolate interconversion. Its function is as follows. Interconversion of serine and glycine. This is Serine hydroxymethyltransferase from Caenorhabditis briggsae.